Consider the following 327-residue polypeptide: Mitochondrial coenzyme A transporter SLC25A42 (327 aa).

Solcar repeat units lie at residues 34–120 (KSVL…YKKL), 132–217 (LTPI…LKKL), and 227–315 (PYTF…TQIL). A run of 6 helical transmembrane segments spans residues 36 to 56 (VLNSLTSGALAGAVAKTAVAP), 92 to 112 (LWRGNSATMVRVIPYAAIQFC), 138 to 158 (LLAGALAGTTATLLTYPLDLV), 192 to 209 (GFTPTVLGVIPYAGISFF), 233 to 253 (LLFGACAGLFGQSSSYPLDVV), and 296 to 316 (VKGPVAVGISFTTFDLTQILL).

This sequence belongs to the mitochondrial carrier (TC 2.A.29) family.

Its subcellular location is the mitochondrion inner membrane. The catalysed reaction is ADP(out) + CoA(in) = ADP(in) + CoA(out). It catalyses the reaction 3'-dephospho-CoA(in) + ADP(out) = 3'-dephospho-CoA(out) + ADP(in). It carries out the reaction adenosine 3',5'-bisphosphate(in) + ADP(out) = adenosine 3',5'-bisphosphate(out) + ADP(in). The enzyme catalyses AMP(in) + ADP(out) = AMP(out) + ADP(in). The catalysed reaction is dADP(in) + ADP(out) = dADP(out) + ADP(in). It catalyses the reaction ADP(in) + ATP(out) = ADP(out) + ATP(in). Mitochondrial carrier mediating the transport of coenzyme A (CoA) in mitochondria in exchange for intramitochondrial (deoxy)adenine nucleotides and adenosine 3',5'-diphosphate. This Xenopus laevis (African clawed frog) protein is Mitochondrial coenzyme A transporter SLC25A42 (slc25a42).